A 147-amino-acid chain; its full sequence is Lysozyme C-2 (147 aa).

A signal peptide spans 1-18 (MKALVILGFLFLSVAVQG). Residues 19 to 147 (KVFERCELAR…VSSYVEGCTL (129 aa)) enclose the C-type lysozyme domain. Intrachain disulfides connect Cys24-Cys145, Cys48-Cys133, Cys83-Cys99, and Cys95-Cys113. Residues Glu53 and Asp71 contribute to the active site.

This sequence belongs to the glycosyl hydrolase 22 family. Monomer. In terms of tissue distribution, stomach-specific.

The catalysed reaction is Hydrolysis of (1-&gt;4)-beta-linkages between N-acetylmuramic acid and N-acetyl-D-glucosamine residues in a peptidoglycan and between N-acetyl-D-glucosamine residues in chitodextrins.. Lysozymes have primarily a bacteriolytic function; those in tissues and body fluids are associated with the monocyte-macrophage system and enhance the activity of immunoagents. In Bos taurus (Bovine), this protein is Lysozyme C-2 (LYZ2).